We begin with the raw amino-acid sequence, 1604 residues long: E3 ubiquitin-protein ligase HECW1 (1604 aa).

Positions Ser-182 to Val-318 constitute a C2 domain. Disordered regions lie at residues Asp-350 to Pro-539, Pro-572 to Val-604, Gly-642 to Ala-667, and Ser-727 to Glu-826. A compositionally biased stretch (polar residues) spans Ser-362–Glu-380. The segment covering Glu-387 to Ser-396 has biased composition (basic and acidic residues). Residues Ser-398–Glu-412 show a composition bias toward polar residues. 2 stretches are compositionally biased toward acidic residues: residues Ala-435–Asp-444 and Glu-458–Ser-469. The span at Gly-494–Asp-505 shows a compositional bias: basic and acidic residues. A compositionally biased stretch (acidic residues) spans Thr-580–Glu-589. Basic and acidic residues predominate over residues Ser-590 to Leu-601. Polar residues-rich tracts occupy residues Ser-654–Ala-667, Asp-748–Gly-762, and His-803–Pro-812. Residues Glu-826 to Met-859 form the WW 1 domain. A Phosphoserine modification is found at Ser-871. A coiled-coil region spans residues Ser-871 to Ser-898. Positions Ala-890–Leu-936 are disordered. Over residues Asp-908–Ser-917 the composition is skewed to gly residues. Phosphoserine occurs at positions 935 and 937. The region spanning Leu-1016–Ile-1049 is the WW 2 domain. One can recognise an HECT domain in the interval Ser-1269–Glu-1604. Cys-1572 acts as the Glycyl thioester intermediate in catalysis.

As to quaternary structure, interacts with DVL1 and SSR3. In terms of tissue distribution, predominantly expressed in neurons of the spinal cord.

It is found in the cytoplasm. It catalyses the reaction S-ubiquitinyl-[E2 ubiquitin-conjugating enzyme]-L-cysteine + [acceptor protein]-L-lysine = [E2 ubiquitin-conjugating enzyme]-L-cysteine + N(6)-ubiquitinyl-[acceptor protein]-L-lysine.. It participates in protein modification; protein ubiquitination. Its function is as follows. E3 ubiquitin-protein ligase that mediates ubiquitination and subsequent degradation of DVL1. In Mus musculus (Mouse), this protein is E3 ubiquitin-protein ligase HECW1 (Hecw1).